Reading from the N-terminus, the 431-residue chain is Enolase (431 aa).

Gln-163 lines the (2R)-2-phosphoglycerate pocket. The active-site Proton donor is the Glu-205. Mg(2+)-binding residues include Asp-242, Glu-288, and Asp-315. (2R)-2-phosphoglycerate is bound by residues Lys-340, Arg-369, Ser-370, and Lys-391. Residue Lys-340 is the Proton acceptor of the active site.

It belongs to the enolase family. Requires Mg(2+) as cofactor.

Its subcellular location is the cytoplasm. The protein localises to the secreted. It localises to the cell surface. It catalyses the reaction (2R)-2-phosphoglycerate = phosphoenolpyruvate + H2O. It functions in the pathway carbohydrate degradation; glycolysis; pyruvate from D-glyceraldehyde 3-phosphate: step 4/5. Catalyzes the reversible conversion of 2-phosphoglycerate (2-PG) into phosphoenolpyruvate (PEP). It is essential for the degradation of carbohydrates via glycolysis. The polypeptide is Enolase (Trichlorobacter lovleyi (strain ATCC BAA-1151 / DSM 17278 / SZ) (Geobacter lovleyi)).